A 580-amino-acid polypeptide reads, in one-letter code: E3 ubiquitin-protein ligase TRIM45 (580 aa).

The RING-type zinc-finger motif lies at 29–98 (CPLCLGLFKA…QIGILCPVCD (70 aa)). 2 consecutive B box-type zinc fingers follow at residues 130-176 (GQGL…MVDL) and 186-227 (GKPI…CDFT). The Zn(2+) site is built by Cys-135, Cys-138, Cys-158, His-162, Cys-191, His-194, Cys-214, and His-219. A coiled-coil region spans residues 281–335 (SEGYIKAIEEHRDKLLKQLEDIRAQKENSLQLQKAQLEQLLADMRTGVEFTEHLL). A Filamin repeat occupies 394–497 (TKEVDPAKCV…VQGSPFTVMV (104 aa)).

Belongs to the TRIM/RBCC family. Expressed in skeletal muscle, brain, heart and pancreas.

Its subcellular location is the cytoplasm. The protein localises to the nucleus. It catalyses the reaction S-ubiquitinyl-[E2 ubiquitin-conjugating enzyme]-L-cysteine + [acceptor protein]-L-lysine = [E2 ubiquitin-conjugating enzyme]-L-cysteine + N(6)-ubiquitinyl-[acceptor protein]-L-lysine.. Its function is as follows. E3 ubiquitin-protein ligase that plays a role in the regulation of inflammatory response. Mechanistically, mediates the 'Lys-48'-linked polyubiquitination of TAB2, a regulatory protein of the kinase TAK1, leading to its degradation via the proteasomal pathway and inhibition of the TLR-mediated inflammatory immune response. May act as a transcriptional repressor in mitogen-activated protein kinase signaling pathway. The polypeptide is E3 ubiquitin-protein ligase TRIM45 (TRIM45) (Homo sapiens (Human)).